We begin with the raw amino-acid sequence, 310 residues long: Repression factor of MSEs protein 1 (310 aa).

Disordered regions lie at residues 83–155 (TQEV…EANA) and 192–230 (DGIR…DEGE). The span at 92-106 (RNTSSSSSSTRSNSS) shows a compositional bias: low complexity. Residues 107–120 (ADISDTEYSGENTP) show a composition bias toward polar residues. Basic residues predominate over residues 127–136 (SRRRRTRSRA). Polar residues predominate over residues 139–155 (RENSLPASLPSISEANA). Residues 192 to 208 (DGIRRRSSRISERDKRR) show a composition bias toward basic and acidic residues. The residue at position 215 (Ser-215) is a Phosphoserine.

As to quaternary structure, interacts directly with HST1 and SUM1. Required for the interaction between HST1 and SUM1.

It is found in the nucleus. Functionally, tethering factor required for histone deacetylase HST1-mediated repression. Probably involved in targeting HST1 to a subset of SUM1-regulated genes. The polypeptide is Repression factor of MSEs protein 1 (RFM1) (Saccharomyces cerevisiae (strain ATCC 204508 / S288c) (Baker's yeast)).